Reading from the N-terminus, the 142-residue chain is Hemoglobin subunit beta-2 (142 aa).

Residues 2 to 142 (SLTDEEKHLI…VTEALSCQYH (141 aa)) form the Globin domain. Histidine 59 and histidine 88 together coordinate heme b.

This sequence belongs to the globin family. Heterotetramer of two alpha chains and two beta chains. Red blood cells.

Functionally, involved in oxygen transport from the lung to the various peripheral tissues. This chain is Hemoglobin subunit beta-2 (HBB2), found in Torpedo marmorata (Marbled electric ray).